A 55-amino-acid polypeptide reads, in one-letter code: Large ribosomal subunit protein bL33 (55 aa).

The span at 1–11 shows a compositional bias: basic and acidic residues; it reads MAKSGRDKIKL. The disordered stretch occupies residues 1–27; the sequence is MAKSGRDKIKLESTAGTGHFYTTTKNK. Over residues 14–24 the composition is skewed to polar residues; sequence TAGTGHFYTTT.

The protein belongs to the bacterial ribosomal protein bL33 family.

The protein is Large ribosomal subunit protein bL33 of Herminiimonas arsenicoxydans.